The primary structure comprises 1801 residues: Focadhesin (1801 aa).

At K819 the chain carries N6-acetyllysine.

As to quaternary structure, interacts with VCL. As to expression, ubiquitous. High expression in brain followed by testis, muscle, pancreas, heart, ovary, small intestine, placenta, prostate, thymus, kidney, colon, liver, lung, spleen and leukocytes. Expression is reduced in most glioblastomas and all glioblastoma cell lines.

The protein localises to the cell junction. Its subcellular location is the focal adhesion. The protein resides in the cytoplasm. It localises to the cytosol. Required for the maintenance of SKIC2 and SKIC3 proteostatic levels in the liver. May be involved in the regulation of RNA degradation by the exosome complex. Potential tumor suppressor in gliomas. In Homo sapiens (Human), this protein is Focadhesin.